Reading from the N-terminus, the 331-residue chain is Probable allantoicase (331 aa).

It belongs to the allantoicase family.

It catalyses the reaction allantoate + H2O = (S)-ureidoglycolate + urea. It functions in the pathway nitrogen metabolism; (S)-allantoin degradation; (S)-ureidoglycolate from allantoate (aminidohydrolase route): step 1/1. The polypeptide is Probable allantoicase (Pseudomonas fluorescens (strain Pf0-1)).